A 565-amino-acid polypeptide reads, in one-letter code: Proline--tRNA ligase (565 aa).

The protein belongs to the class-II aminoacyl-tRNA synthetase family. ProS type 1 subfamily. Homodimer.

The protein resides in the cytoplasm. The enzyme catalyses tRNA(Pro) + L-proline + ATP = L-prolyl-tRNA(Pro) + AMP + diphosphate. Catalyzes the attachment of proline to tRNA(Pro) in a two-step reaction: proline is first activated by ATP to form Pro-AMP and then transferred to the acceptor end of tRNA(Pro). As ProRS can inadvertently accommodate and process non-cognate amino acids such as alanine and cysteine, to avoid such errors it has two additional distinct editing activities against alanine. One activity is designated as 'pretransfer' editing and involves the tRNA(Pro)-independent hydrolysis of activated Ala-AMP. The other activity is designated 'posttransfer' editing and involves deacylation of mischarged Ala-tRNA(Pro). The misacylated Cys-tRNA(Pro) is not edited by ProRS. This is Proline--tRNA ligase from Lactobacillus acidophilus (strain ATCC 700396 / NCK56 / N2 / NCFM).